A 115-amino-acid chain; its full sequence is Nucleoid-associated protein NATL1_00191 (115 aa).

A disordered region spans residues 89–115 (STSTMKERMEDLTGGFKLNLPGMGEES).

It belongs to the YbaB/EbfC family. As to quaternary structure, homodimer.

Its subcellular location is the cytoplasm. It is found in the nucleoid. In terms of biological role, binds to DNA and alters its conformation. May be involved in regulation of gene expression, nucleoid organization and DNA protection. The sequence is that of Nucleoid-associated protein NATL1_00191 from Prochlorococcus marinus (strain NATL1A).